The primary structure comprises 593 residues: Mitoguardin 2 (593 aa).

The next 2 helical transmembrane spans lie at 11 to 31 (MIQA…TTFG) and 42 to 62 (PGLR…ALAA). 2 disordered regions span residues 101 to 134 (KKGY…HSGS) and 195 to 228 (LSVG…EPES). Residues 107–123 (RRVQSPSSKSNDTLSGI) show a composition bias toward polar residues. Positions 124 to 134 (SSIEPSKHSGS) are enriched in low complexity. Phosphoserine is present on Ser-132. Position 206 is a phosphothreonine (Thr-206). Residues Ser-220, Ser-224, and Ser-228 each carry the phosphoserine modification. At Thr-273 the chain carries Phosphothreonine. Residues Ser-276 and Ser-295 each carry the phosphoserine modification. The FFAT signature appears at 292–298 (SFFSATE). Residues 563–583 (ILLGYLGVPAASSIGLNGVLP) traverse the membrane as a helical segment.

It belongs to the mitoguardin family. As to quaternary structure, homodimer and heterodimer; forms heterodimers with MIGA1. Interacts with PLD6/MitoPLD. Interacts (via phosphorylated FFAT motif) with MOSPD2. Post-translationally, phosphorylation at Ser-295 of the FFAT motif activates interaction with MOSPD2.

It localises to the mitochondrion outer membrane. Functionally, regulator of mitochondrial fusion: acts by forming homo- and heterodimers at the mitochondrial outer membrane and facilitating the formation of PLD6/MitoPLD dimers. May act by regulating phospholipid metabolism via PLD6/MitoPLD. This chain is Mitoguardin 2, found in Bos taurus (Bovine).